The primary structure comprises 439 residues: Ribosomal protein uS12 methylthiotransferase RimO (439 aa).

Positions 2 to 114 (SKLYLMSLGC…IDEMILKKTN (113 aa)) constitute an MTTase N-terminal domain. Residues Cys11, Cys45, Cys77, Cys146, Cys150, and Cys153 each contribute to the [4Fe-4S] cluster site. Residues 132-363 (TGSNSHAFIK…VDEVIEKSFE (232 aa)) enclose the Radical SAM core domain.

Belongs to the methylthiotransferase family. RimO subfamily. [4Fe-4S] cluster serves as cofactor.

The protein localises to the cytoplasm. It carries out the reaction L-aspartate(89)-[ribosomal protein uS12]-hydrogen + (sulfur carrier)-SH + AH2 + 2 S-adenosyl-L-methionine = 3-methylsulfanyl-L-aspartate(89)-[ribosomal protein uS12]-hydrogen + (sulfur carrier)-H + 5'-deoxyadenosine + L-methionine + A + S-adenosyl-L-homocysteine + 2 H(+). Its function is as follows. Catalyzes the methylthiolation of an aspartic acid residue of ribosomal protein uS12. In Campylobacter jejuni subsp. jejuni serotype O:6 (strain 81116 / NCTC 11828), this protein is Ribosomal protein uS12 methylthiotransferase RimO.